Here is a 387-residue protein sequence, read N- to C-terminus: Alkanesulfonate monooxygenase (387 aa).

The protein belongs to the SsuD family.

It carries out the reaction an alkanesulfonate + FMNH2 + O2 = an aldehyde + FMN + sulfite + H2O + 2 H(+). Catalyzes the desulfonation of aliphatic sulfonates. The polypeptide is Alkanesulfonate monooxygenase (Cupriavidus metallidurans (strain ATCC 43123 / DSM 2839 / NBRC 102507 / CH34) (Ralstonia metallidurans)).